Here is a 598-residue protein sequence, read N- to C-terminus: MTDQIAQNSARPAWETSDHIDDQVVNELRQKFGPDAFTFQPTRTGMPVVWVKREQLIEVMQYLKSLPKPYVMLYDLHGVDERVRTHRQGLPAADFSVFYHLISLDRNKDIMLKVALSEKDLNLPTLTSIFPNSNWYEREVWDMFGIVFNGHPNLRRIMMLPNWEGHPLRKDYPARATEFDPYVLTKQKEDLEMESLTFKPEEWGMKRGTENEDFMFLNLGPNHPSSHGAFRIILQLDGEEIVNCVPDVGYHHRGAEKMGERQSWHSYIPYTDRIEYLGGCVNEMPYVLAVEKLAGIEVPERVKVIRVMLSELFRINSHLLYISTFIQDVGAMTPVFFAFTDRQKVYDIVEAITGFRMHPAWFRIGGVAHDLPKGWERLLREFLDWMPKRLDSYVKAALQNSILKGRTIGVASYNAKEALDWGVTGAGLRATGVEFDVRKWRPYSGYENFEFEIPVASNGDCYDRVMLKVEELRQSLRILEQCYKNMPAGPFKADHPLTTPPPKERTLQHIETMINHFLQVSWGPVMPANESFQMVEATKGINSYYLTSDGSTMSYRTRIRTPSFAHLQQIPAVIRGSLVSDLIVYLGSIDFVMSDVDR.

The NADH dehydrogenase I subunit C stretch occupies residues 1–189; that stretch reads MTDQIAQNSA…DPYVLTKQKE (189 aa). The NADH dehydrogenase I subunit D stretch occupies residues 213–598; sequence DFMFLNLGPN…IDFVMSDVDR (386 aa).

It in the N-terminal section; belongs to the complex I 30 kDa subunit family. The protein in the C-terminal section; belongs to the complex I 49 kDa subunit family. In terms of assembly, NDH-1 is composed of 13 different subunits. Subunits NuoB, CD, E, F, and G constitute the peripheral sector of the complex.

The protein localises to the cell inner membrane. The catalysed reaction is a quinone + NADH + 5 H(+)(in) = a quinol + NAD(+) + 4 H(+)(out). Functionally, NDH-1 shuttles electrons from NADH, via FMN and iron-sulfur (Fe-S) centers, to quinones in the respiratory chain. The immediate electron acceptor for the enzyme in this species is believed to be ubiquinone. Couples the redox reaction to proton translocation (for every two electrons transferred, four hydrogen ions are translocated across the cytoplasmic membrane), and thus conserves the redox energy in a proton gradient. This chain is NADH-quinone oxidoreductase subunit C/D, found in Proteus mirabilis (strain HI4320).